We begin with the raw amino-acid sequence, 425 residues long: Enolase (425 aa).

Glutamine 162 serves as a coordination point for (2R)-2-phosphoglycerate. Glutamate 204 (proton donor) is an active-site residue. Mg(2+) is bound by residues aspartate 241, glutamate 284, and aspartate 311. (2R)-2-phosphoglycerate-binding residues include lysine 336, arginine 365, serine 366, and lysine 387. Lysine 336 functions as the Proton acceptor in the catalytic mechanism.

The protein belongs to the enolase family. Requires Mg(2+) as cofactor.

Its subcellular location is the cytoplasm. The protein localises to the secreted. It localises to the cell surface. The enzyme catalyses (2R)-2-phosphoglycerate = phosphoenolpyruvate + H2O. It functions in the pathway carbohydrate degradation; glycolysis; pyruvate from D-glyceraldehyde 3-phosphate: step 4/5. Its function is as follows. Catalyzes the reversible conversion of 2-phosphoglycerate (2-PG) into phosphoenolpyruvate (PEP). It is essential for the degradation of carbohydrates via glycolysis. This Brucella ovis (strain ATCC 25840 / 63/290 / NCTC 10512) protein is Enolase.